We begin with the raw amino-acid sequence, 268 residues long: tRNA pseudouridine synthase A (268 aa).

Catalysis depends on Asp54, which acts as the Nucleophile. Tyr112 contacts substrate.

This sequence belongs to the tRNA pseudouridine synthase TruA family. Homodimer.

The enzyme catalyses uridine(38/39/40) in tRNA = pseudouridine(38/39/40) in tRNA. Its function is as follows. Formation of pseudouridine at positions 38, 39 and 40 in the anticodon stem and loop of transfer RNAs. This Bordetella petrii (strain ATCC BAA-461 / DSM 12804 / CCUG 43448) protein is tRNA pseudouridine synthase A.